The sequence spans 152 residues: Ribosomal RNA large subunit methyltransferase H (152 aa).

Residues Leu-68, Gly-100, and 119-124 each bind S-adenosyl-L-methionine; that span reads FGRMTW.

Belongs to the RNA methyltransferase RlmH family. As to quaternary structure, homodimer.

The protein resides in the cytoplasm. It carries out the reaction pseudouridine(1915) in 23S rRNA + S-adenosyl-L-methionine = N(3)-methylpseudouridine(1915) in 23S rRNA + S-adenosyl-L-homocysteine + H(+). Functionally, specifically methylates the pseudouridine at position 1915 (m3Psi1915) in 23S rRNA. This Paramagnetospirillum magneticum (strain ATCC 700264 / AMB-1) (Magnetospirillum magneticum) protein is Ribosomal RNA large subunit methyltransferase H.